Consider the following 278-residue polypeptide: Sulfur carrier protein FdhD (278 aa).

Cysteine 121 functions as the Cysteine persulfide intermediate in the catalytic mechanism. 260–265 contacts Mo-bis(molybdopterin guanine dinucleotide); it reads FCKPGR.

Belongs to the FdhD family.

It is found in the cytoplasm. Its function is as follows. Required for formate dehydrogenase (FDH) activity. Acts as a sulfur carrier protein that transfers sulfur from IscS to the molybdenum cofactor prior to its insertion into FDH. The polypeptide is Sulfur carrier protein FdhD (Salmonella paratyphi A (strain ATCC 9150 / SARB42)).